A 474-amino-acid chain; its full sequence is MAKDALIVKTTPLPQSRISFELEIPSETCKTCVNETINSISRSAKIPGFRLGKIPKQVLIQRIGITQLHASALEKIIDKSWQEALKIKSIEPLSEPELVDGFESLLAKFSPEKSLKVTLQTDVAPELKLKKSKGLSVEISKTKFDPKSIDEALEKSRNQFANIIPVTNRAAKLGDIAVVSFKGKYKDSGKEIDGGTSESMDLELEKNKMIPGFVEGIVKMKIGDTKTLNLKFPDDYSHEDSRGKEAIFEVNLKDLKEKELPELNDDFAKQSGNKESLKELKKDIEKQLKDNFEKTQKDIKIEALLDALTNELVAEIPKSMIDIEVRNNIEQTAQRFAQQGLDVKSTFTPELVKSLADSTRPQAEKNVQRNLALKALAETENIKVEQDEIDSKMKDYEDAISQSSKQIDIKKLTEVLTNDLLKEKLIIWLEENSEVKEKTTKTSKATKTSKTTKATKTASKTTKTTKTQNKKEKK.

A PPIase FKBP-type domain is found at 174-261 (GDIAVVSFKG…LKDLKEKELP (88 aa)). Residues 435–474 (VKEKTTKTSKATKTSKTTKATKTASKTTKTTKTQNKKEKK) form a disordered region. The span at 442–467 (TSKATKTSKTTKATKTASKTTKTTKT) shows a compositional bias: low complexity.

The protein belongs to the FKBP-type PPIase family. Tig subfamily.

It localises to the cytoplasm. The catalysed reaction is [protein]-peptidylproline (omega=180) = [protein]-peptidylproline (omega=0). Its function is as follows. Involved in protein export. Acts as a chaperone by maintaining the newly synthesized protein in an open conformation. Functions as a peptidyl-prolyl cis-trans isomerase. In Prochlorococcus marinus (strain AS9601), this protein is Trigger factor.